We begin with the raw amino-acid sequence, 109 residues long: Phycoerythrin alpha-2 subunit (109 aa).

Residues aspartate 52, serine 53, glutamate 63, arginine 64, cysteine 67, threonine 72, lysine 74, alanine 75, and lysine 84 each contribute to the (2R,3E)-phycoerythrobilin site.

The protein belongs to the phycoerythrin family. As to quaternary structure, heterotetramer of 2 different alpha chains and 2 identical beta chains which form 2 alpha-beta heterodimers within the heterotetramer. The two alpha-beta heterodimers are rotated to an open configuration in contrast to the closed configuration found in other cryptophyte species due to the insertion of a single amino acid, Asp-65, in a conserved region of the alpha chain. In the open form, the central chromophores are not in physical contact but are separated by a water-filled channel. Post-translationally, contains three phycoerythrobilin chromophores with binding mediated by both the alpha and beta subunits.

The protein localises to the plastid. It is found in the chloroplast thylakoid membrane. Light-harvesting photosynthetic tetrapyrrole chromophore-protein from the phycobiliprotein complex. The chain is Phycoerythrin alpha-2 subunit from Hemiselmis andersenii (Cryptophyte alga).